The following is a 588-amino-acid chain: MSFARIFITILLLFILRRAFKWLKMIVDARSIGLPMVFVPMDQTNFLWVLLSSRNRFRLQSLLPLWLWKRLSITIPGWELFEPSNPLETSPTSRTEATDTSFILVGLRTYDFWTADPQVAHEVLRRIHDFEQPRELEFLLAKFGPNVLTANGDQWARHRKIVTKVINERISKAVFESSIYYCRRILHDVLTTSPDKSSSVETTMLFDKLTQISFSILIGVGIGDKFPWYDEEKQEPEPPYQMAYKDALLTYVNNAFGVAILPPRLLNHWPSWAPGHKKMRTVGRSMTEFCMRNKSLIDQEQNRIARGETSTSSNADFIALLVQASQSGEDSQQSLSENEMISNLFAFTAGGYKTIAGALDFAVVLLARFPLWQDWLIEEVDSLIPADGDGSEPLEYTTIYPQAVRTLAFVMETERLYGSASRLFRIASGPQTIQVSSGTTVRLPAKTRVHINVVALHHLPSWRDINHQSDPDRFKPSPDAPDEKLFRPSRWINPPGSKYTHFHPPKGTFVPWSQGPRICPGQKMAQVEITTLILCLLRRHRIEPSRLEGETLQDAERGLDAKLQNVQWGGIVSLEKDPHLKFRVSQRR.

An N-terminal signal peptide occupies residues 1-21 (MSFARIFITILLLFILRRAFK). An N-linked (GlcNAc...) asparagine glycan is attached at N293. Residues 467–486 (HQSDPDRFKPSPDAPDEKLF) are compositionally biased toward basic and acidic residues. Residues 467–490 (HQSDPDRFKPSPDAPDEKLFRPSR) are disordered. C519 contacts heme.

Belongs to the cytochrome P450 family. The cofactor is heme.

Its pathway is secondary metabolite biosynthesis. In terms of biological role, cytochrome P450 monooxygenase; part of the gene cluster that mediates the biosynthesis of phomenoic acid, a long chain aliphatic carboxylic acid that does not appear to be essential for pathogenicity but may play a role in allowing to outcompete other fungi in the environmental niche via its antifungal properties. The polyketide synthase produces the long methylated aliphatic carboxylic acid chain of phomenoic acid. The cluster-specific cytochrome P450 monooxygenase may then hydroxylate the methyl group of carbon 31. The putative dehydrogenase YogA, which has no obvious role in phomenoic acid biosynthesis, may further modify phomenoic acid to produce a compound not identified yet. This chain is Phomenoic acid biosynthesis cluster cytochrome P450 monooxygenase, found in Leptosphaeria maculans (strain JN3 / isolate v23.1.3 / race Av1-4-5-6-7-8) (Blackleg fungus).